The primary structure comprises 265 residues: MKSVLGFKKAKVTQEKISMVTCYDYTLAKIINSTDIDCILVGDSGGMVLLGKKNTTYTTLDDMQFMTQAVANGATDKFIVADLPFMSYRQSLETTMQAVMALIQSGAHAIKLEGSSGNLDIIKHIVDSGVPIMGHIGMTPQFINSFGGFKVQGRTEEAAKHLLEEAKLLEQAGCFGIVLECIPANIAKDITQNLDIPTIGIGAGSNTDGQILVLQDMLGMNTDFQPKFVKKYIDGSKLFSDAINTYVKETKANTFPTKEHCYDYC.

Positions 43 and 82 each coordinate Mg(2+). 3-methyl-2-oxobutanoate contacts are provided by residues 43 to 44 (DS), Asp82, and Lys111. Glu113 provides a ligand contact to Mg(2+). Catalysis depends on Glu180, which acts as the Proton acceptor.

It belongs to the PanB family. In terms of assembly, homodecamer; pentamer of dimers. Requires Mg(2+) as cofactor.

Its subcellular location is the cytoplasm. It carries out the reaction 3-methyl-2-oxobutanoate + (6R)-5,10-methylene-5,6,7,8-tetrahydrofolate + H2O = 2-dehydropantoate + (6S)-5,6,7,8-tetrahydrofolate. It functions in the pathway cofactor biosynthesis; (R)-pantothenate biosynthesis; (R)-pantoate from 3-methyl-2-oxobutanoate: step 1/2. In terms of biological role, catalyzes the reversible reaction in which hydroxymethyl group from 5,10-methylenetetrahydrofolate is transferred onto alpha-ketoisovalerate to form ketopantoate. The polypeptide is 3-methyl-2-oxobutanoate hydroxymethyltransferase (Francisella tularensis subsp. holarctica (strain OSU18)).